The primary structure comprises 373 residues: Histidinol-phosphate aminotransferase 2 (373 aa).

Lysine 229 carries the post-translational modification N6-(pyridoxal phosphate)lysine.

Belongs to the class-II pyridoxal-phosphate-dependent aminotransferase family. Histidinol-phosphate aminotransferase subfamily. As to quaternary structure, homodimer. It depends on pyridoxal 5'-phosphate as a cofactor.

It carries out the reaction L-histidinol phosphate + 2-oxoglutarate = 3-(imidazol-4-yl)-2-oxopropyl phosphate + L-glutamate. The protein operates within amino-acid biosynthesis; L-histidine biosynthesis; L-histidine from 5-phospho-alpha-D-ribose 1-diphosphate: step 7/9. This is Histidinol-phosphate aminotransferase 2 from Hydrogenovibrio crunogenus (strain DSM 25203 / XCL-2) (Thiomicrospira crunogena).